Reading from the N-terminus, the 295-residue chain is Proline-rich protein 18 (295 aa).

The segment covering 1-13 (MPFPPMPPPPAPA) has biased composition (pro residues). The tract at residues 1–133 (MPFPPMPPPP…GAGPCPDSAA (133 aa)) is disordered. The span at 14–29 (PGAQAARQLPRRPCAA) shows a compositional bias: low complexity. The residue at position 47 (Ser47) is a Phosphoserine. Arg83 carries the post-translational modification Omega-N-methylarginine. The span at 103–126 (ARTTYAATSAGTGTTAAGTSSGAG) shows a compositional bias: low complexity. Arg172 bears the Asymmetric dimethylarginine mark. A compositionally biased stretch (low complexity) spans 181 to 192 (ARAAGPRRGGPA). Residues 181–227 (ARAAGPRRGGPASDPDAPPTAGQGRRAPPPGAQLLHGGLQVPQLSPR) form a disordered region. Omega-N-methylarginine is present on Arg188.

This Homo sapiens (Human) protein is Proline-rich protein 18 (PRR18).